The following is a 2629-amino-acid chain: Telomerase protein component 1 (2629 aa).

TEP1 N-terminal repeat units lie at residues 1–30, 31–60, 61–90, and 91–120; these read MEKLCGYVPVHPDILSLKNRCLTMLSDIQP, LEKIHGQRSVNPDILSLENRCLTLLPDLQP, MEKIHGQRSVHPDILSSENRCLTLLPDLQS, and LEKLCGHMSSHPDVLSLENRCLATLPTVKR. The region spanning 231–689 is the TROVE domain; the sequence is LKLTSGDSDS…VKHNLPPLPG (459 aa). The span at 390–401 shows a compositional bias: basic residues; that stretch reads PRKHRSKTRSRQ. The disordered stretch occupies residues 390–416; that stretch reads PRKHRSKTRSRQPPRPQRTKPPFSESG. Residues 1175 to 1582 enclose the NACHT domain; that stretch reads RLSLVIGQAG…KFLTNLHVVA (408 aa). 1181–1188 provides a ligand contact to ATP; it reads GQAGQGKT. WD repeat units lie at residues 1424 to 1461, 1685 to 1724, 1727 to 1765, 1768 to 1807, 1809 to 1848, 1851 to 1890, 1893 to 1934, 1936 to 1975, 1978 to 2016, 2019 to 2058, 2070 to 2109, 2116 to 2154, 2157 to 2194, 2200 to 2244, 2247 to 2285, 2288 to 2327, 2329 to 2365, 2378 to 2427, 2470 to 2510, 2555 to 2592, and 2594 to 2628; these read VLPQALTALEVTHSGLTVDQLHAVLSTWLTLPKETKSW, PISSSPTAVAFSPNGQRAAVGTAGGTIYLLNLRTWQEEKA, SGCDGISSFAFLSDTALFLTTFDGLLELWDLQHGCWVFQ, AHQYQITGCCLSPDRRLLATVCLGGYVKLWDTVQGQLAFQ, THPKSLNCITFHPEGQVVATGNWSGIVTFFQADGLKVTKE, GPGPSVRTLAFSAPGKVVALGRIDGTVELWAWQEGTRLAA, AQCG…GCLG, LYLSPALSVALNPDGDQVAVGYRGDGIKIYRISSGPQEAQ, ELNVAVSALVWLSPSVLVSGAEDGSLHGWMLRRNSLQSL, SSVCQKPVLGLAASQEFLASASEDFTVRLWPRQLLTQPHA, GHEGPVCCCSFSPDGRILATAGRDRNLLCWDVKVAQAPLL, CHRDWITGCTWTKDNILISCSSDGSVGLWNPEAGQQLGQ, GHQSAVSAVVAVEEHIVSVSRDGTLKVWDRQGVELTSI, PISQ…QIHT, GHSGPVTAAAASEASGLLLTSDNSSVRLWQIPKEADDTC, RSSAVITAVAWAPDGSLVVSGNEAGELTLWQKAQAVATAR, PGRVSDLIWCSANAFFVLSANENVSEWQVELRKGSTC, EDLG…SSIL, PNGS…GEWV, IHLGSVTALHVLPGLLVTASEDRDVKLWERPSMQLLGL, and RCEGPVSCLEPWMEPSSPLQLAVGDAQGNLYFLSW.

In terms of assembly, associated component of the telomerase holoenzyme complex. Component of the vault ribonucleoprotein particle, at least composed of MVP, PARP4 and one or more vault RNAs (vRNAs). Binds to VAULTRC1, VAULTRC2 and VAULTRC4/hvg4 vRNAs.

It is found in the nucleus. The protein localises to the chromosome. It localises to the telomere. Component of the telomerase ribonucleoprotein complex that is essential for the replication of chromosome termini. Also a component of the ribonucleoprotein vaults particle, a multi-subunit structure involved in nucleo-cytoplasmic transport. Responsible for the localizing and stabilizing vault RNA (vRNA) association in the vault ribonucleoprotein particle. Binds to TERC. This is Telomerase protein component 1 (Tep1) from Rattus norvegicus (Rat).